The chain runs to 428 residues: Putative aspergillopepsin A-like aspartic endopeptidase AFUA_2G15950 (428 aa).

The first 19 residues, 1-19, serve as a signal peptide directing secretion; it reads MHSLQSFLFLLLLGYGVFA. Residues 20–90 constitute a propeptide, activation peptide; sequence APTSPQAQSQ…GTAANLVTDV (71 aa). In terms of domain architecture, Peptidase A1 spans 110–425; the sequence is FVSPVTIGGQ…DLRGPSIGLA (316 aa). Aspartate 126 is an active-site residue. The N-linked (GlcNAc...) asparagine glycan is linked to asparagine 276. Aspartate 312 is a catalytic residue. Asparagine 380 carries an N-linked (GlcNAc...) asparagine glycan.

Belongs to the peptidase A1 family.

It is found in the secreted. The polypeptide is Putative aspergillopepsin A-like aspartic endopeptidase AFUA_2G15950 (Aspergillus fumigatus (strain ATCC MYA-4609 / CBS 101355 / FGSC A1100 / Af293) (Neosartorya fumigata)).